The following is a 277-amino-acid chain: MEMO1 family protein Tpet_0837 (277 aa).

It belongs to the MEMO1 family.

In Thermotoga petrophila (strain ATCC BAA-488 / DSM 13995 / JCM 10881 / RKU-1), this protein is MEMO1 family protein Tpet_0837.